Here is a 65-residue protein sequence, read N- to C-terminus: Large ribosomal subunit protein uL29 (65 aa).

It belongs to the universal ribosomal protein uL29 family.

This is Large ribosomal subunit protein uL29 from Lactobacillus helveticus (strain DPC 4571).